A 319-amino-acid polypeptide reads, in one-letter code: MVSSDTGECFSGATVRVPADLADALKQQALEQGFALAGIAAVPSGERIAMRTAALQRWLAAGHQADMAWMQDPRRQAIELLLPGVQSVLAVALNYYVDQQQTPASPKIARYGWGRDYHRVMDQRLRRLGRWLEEQQPSCRWRACVDSAPLMDKAWAEEAGLGWIGKNGNLISPSHGSWLLLGHLLTTASLPADQPARSLCGHCQRCLPACPTAAITEPFVVDSRRCIAFHTIENRDEQVPLPLHGWVAGCDVCQEVCPWNQHHAQSSADPAVQPREWILSSTVNEMASWSDDTWSERLQASALRRIKPWMWRRNLADLG.

Residue Asp-146 is the Proton donor of the active site. The region spanning 188 to 220 (ASLPADQPARSLCGHCQRCLPACPTAAITEPFV) is the 4Fe-4S ferredoxin-type domain. The [4Fe-4S] cluster site is built by Cys-200, Cys-203, Cys-206, Cys-210, Cys-226, Cys-250, Cys-253, and Cys-257.

Belongs to the QueG family. Monomer. Cob(II)alamin is required as a cofactor. It depends on [4Fe-4S] cluster as a cofactor.

Its subcellular location is the cytoplasm. The catalysed reaction is epoxyqueuosine(34) in tRNA + AH2 = queuosine(34) in tRNA + A + H2O. It participates in tRNA modification; tRNA-queuosine biosynthesis. Catalyzes the conversion of epoxyqueuosine (oQ) to queuosine (Q), which is a hypermodified base found in the wobble positions of tRNA(Asp), tRNA(Asn), tRNA(His) and tRNA(Tyr). This is Epoxyqueuosine reductase from Synechococcus sp. (strain RCC307).